A 482-amino-acid polypeptide reads, in one-letter code: Glutamate-rich WD repeat-containing protein 1 (482 aa).

Disordered stretches follow at residues 1-75 (MSSK…WRAG) and 148-180 (QLHKTKHDDEDSDDDEDSDDDEESDDEDDEDKD). Composition is skewed to acidic residues over residues 27–63 (NGEDDFENDDEVESFEDDEQSFEEIEEGGEEGGDNDG) and 157–180 (EDSDDDEDSDDDEESDDEDDEDKD). WD repeat units lie at residues 191 to 231 (NHNG…KALD), 294 to 334 (GHTE…PAIT), 337 to 377 (AHTA…DNSP), 383 to 423 (YHTG…DTEE), and 446 to 482 (QGQHDIKEVHWHPQIPHVAISTSIDGFNIFKSSNSEE).

The protein resides in the nucleus. The protein localises to the nucleolus. In Dictyostelium discoideum (Social amoeba), this protein is Glutamate-rich WD repeat-containing protein 1 (grwd1).